The chain runs to 714 residues: Phosphoribosylformylglycinamidine synthase subunit PurL (714 aa).

H34 is a catalytic residue. An ATP-binding site is contributed by Y37. E78 lines the Mg(2+) pocket. Residues 79 to 82 (SHNH) and R101 contribute to the substrate site. The active-site Proton acceptor is H80. D102 contributes to the Mg(2+) binding site. Q226 is a binding site for substrate. D254 is a binding site for Mg(2+). Position 298–300 (298–300 (ESQ)) interacts with substrate. D474 and G511 together coordinate ATP. N512 is a binding site for Mg(2+). S514 provides a ligand contact to substrate.

This sequence belongs to the FGAMS family. In terms of assembly, monomer. Part of the FGAM synthase complex composed of 1 PurL, 1 PurQ and 2 PurS subunits.

It is found in the cytoplasm. It carries out the reaction N(2)-formyl-N(1)-(5-phospho-beta-D-ribosyl)glycinamide + L-glutamine + ATP + H2O = 2-formamido-N(1)-(5-O-phospho-beta-D-ribosyl)acetamidine + L-glutamate + ADP + phosphate + H(+). The protein operates within purine metabolism; IMP biosynthesis via de novo pathway; 5-amino-1-(5-phospho-D-ribosyl)imidazole from N(2)-formyl-N(1)-(5-phospho-D-ribosyl)glycinamide: step 1/2. Functionally, part of the phosphoribosylformylglycinamidine synthase complex involved in the purines biosynthetic pathway. Catalyzes the ATP-dependent conversion of formylglycinamide ribonucleotide (FGAR) and glutamine to yield formylglycinamidine ribonucleotide (FGAM) and glutamate. The FGAM synthase complex is composed of three subunits. PurQ produces an ammonia molecule by converting glutamine to glutamate. PurL transfers the ammonia molecule to FGAR to form FGAM in an ATP-dependent manner. PurS interacts with PurQ and PurL and is thought to assist in the transfer of the ammonia molecule from PurQ to PurL. In Methanothermobacter marburgensis (strain ATCC BAA-927 / DSM 2133 / JCM 14651 / NBRC 100331 / OCM 82 / Marburg) (Methanobacterium thermoautotrophicum), this protein is Phosphoribosylformylglycinamidine synthase subunit PurL.